A 185-amino-acid chain; its full sequence is Ribosome-recycling factor (185 aa).

This sequence belongs to the RRF family.

The protein resides in the cytoplasm. Responsible for the release of ribosomes from messenger RNA at the termination of protein biosynthesis. May increase the efficiency of translation by recycling ribosomes from one round of translation to another. The polypeptide is Ribosome-recycling factor (Campylobacter jejuni subsp. jejuni serotype O:2 (strain ATCC 700819 / NCTC 11168)).